Here is a 155-residue protein sequence, read N- to C-terminus: MQGLVLQLTRAGFLMLLWVFIWSVLRILKTDIYAPTGAVMMRRGLALRGTLLGARQRRHAARYLVVTEGALTGARITLSEQPVLIGRADDSTLVLTDDYASTRHARLSMRGSEWYVEDLGSTNGTYLDRAKVTTAVRVPIGTPVRIGKTAIELRP.

A helical transmembrane segment spans residues 6–28 (LQLTRAGFLMLLWVFIWSVLRIL). Threonine 36 is modified (phosphothreonine). Residues 83–132 (VLIGRADDSTLVLTDDYASTRHARLSMRGSEWYVEDLGSTNGTYLDRAKV) enclose the FHA domain.

In terms of processing, phosphorylated by PknB. Dephosphorylated by PstP.

It localises to the cell membrane. This chain is FHA domain-containing protein FhaB (fhaB), found in Mycobacterium tuberculosis (strain CDC 1551 / Oshkosh).